A 517-amino-acid polypeptide reads, in one-letter code: Ribonuclease Y (517 aa).

Residues 1 to 21 (MIESLIALIAAIVGLGIGYLV) traverse the membrane as a helical segment. Positions 207 to 273 (LINVINIKND…TKVIELLVED (67 aa)) constitute a KH domain. The 94-residue stretch at 333–426 (ALAHSLEVAH…VCAADTLSAA (94 aa)) folds into the HD domain.

It belongs to the RNase Y family.

The protein resides in the cell membrane. Its function is as follows. Endoribonuclease that initiates mRNA decay. The sequence is that of Ribonuclease Y from Campylobacter jejuni subsp. doylei (strain ATCC BAA-1458 / RM4099 / 269.97).